Here is a 235-residue protein sequence, read N- to C-terminus: MPVYRLAAEHNAFPPAEGANEDGLVAVGGDLSPQRLLAAYRSGIFPWYSAGEPLLWWSLDPRLVLRPPALHVPRSLKKAIRQGAFRITFDHVFEQVMHQCGAVRAAEGTWITPEMEQAYLRLHQMGFAHSCESWLMDENHRYQLAGGIYGVAIGGAFFGESMFYRQPNASKVALVALVGHLAQQGYSLMDCQMTTQHMLRFGAVEMPRSVFLEDLQQAIAQPIPAGLWQTVSPLI.

It belongs to the L/F-transferase family.

The protein resides in the cytoplasm. The enzyme catalyses N-terminal L-lysyl-[protein] + L-leucyl-tRNA(Leu) = N-terminal L-leucyl-L-lysyl-[protein] + tRNA(Leu) + H(+). It carries out the reaction N-terminal L-arginyl-[protein] + L-leucyl-tRNA(Leu) = N-terminal L-leucyl-L-arginyl-[protein] + tRNA(Leu) + H(+). The catalysed reaction is L-phenylalanyl-tRNA(Phe) + an N-terminal L-alpha-aminoacyl-[protein] = an N-terminal L-phenylalanyl-L-alpha-aminoacyl-[protein] + tRNA(Phe). Functionally, functions in the N-end rule pathway of protein degradation where it conjugates Leu, Phe and, less efficiently, Met from aminoacyl-tRNAs to the N-termini of proteins containing an N-terminal arginine or lysine. The polypeptide is Leucyl/phenylalanyl-tRNA--protein transferase (Magnetococcus marinus (strain ATCC BAA-1437 / JCM 17883 / MC-1)).